Here is a 231-residue protein sequence, read N- to C-terminus: LexA repressor (231 aa).

The H-T-H motif DNA-binding region spans Phe-26–Thr-46. Residues Ser-152 and Lys-190 each act as for autocatalytic cleavage activity in the active site.

It belongs to the peptidase S24 family. In terms of assembly, homodimer.

The catalysed reaction is Hydrolysis of Ala-|-Gly bond in repressor LexA.. Functionally, represses a number of genes involved in the response to DNA damage (SOS response), including recA and lexA. In the presence of single-stranded DNA, RecA interacts with LexA causing an autocatalytic cleavage which disrupts the DNA-binding part of LexA, leading to derepression of the SOS regulon and eventually DNA repair. This Bradyrhizobium diazoefficiens (strain JCM 10833 / BCRC 13528 / IAM 13628 / NBRC 14792 / USDA 110) protein is LexA repressor.